We begin with the raw amino-acid sequence, 357 residues long: Homoserine kinase (357 aa).

Lys133 participates in a covalent cross-link: Glycyl lysine isopeptide (Lys-Gly) (interchain with G-Cter in ubiquitin).

This sequence belongs to the GHMP kinase family. Homoserine kinase subfamily. In terms of assembly, homodimer.

It catalyses the reaction L-homoserine + ATP = O-phospho-L-homoserine + ADP + H(+). The protein operates within amino-acid biosynthesis; L-threonine biosynthesis; L-threonine from L-aspartate: step 4/5. Functionally, commits homoserine to the threonine biosynthesis pathway by catalyzing its O-phosphorylation. The sequence is that of Homoserine kinase (THR1) from Saccharomyces cerevisiae (strain ATCC 204508 / S288c) (Baker's yeast).